A 318-amino-acid polypeptide reads, in one-letter code: Methionyl-tRNA formyltransferase (318 aa).

(6S)-5,6,7,8-tetrahydrofolate is bound at residue 112 to 115 (SILP).

It belongs to the Fmt family.

The enzyme catalyses L-methionyl-tRNA(fMet) + (6R)-10-formyltetrahydrofolate = N-formyl-L-methionyl-tRNA(fMet) + (6S)-5,6,7,8-tetrahydrofolate + H(+). Functionally, attaches a formyl group to the free amino group of methionyl-tRNA(fMet). The formyl group appears to play a dual role in the initiator identity of N-formylmethionyl-tRNA by promoting its recognition by IF2 and preventing the misappropriation of this tRNA by the elongation apparatus. This is Methionyl-tRNA formyltransferase from Shewanella putrefaciens (strain CN-32 / ATCC BAA-453).